We begin with the raw amino-acid sequence, 125 residues long: Cystatin-like cysteine protease inhibitor EPIC2A (125 aa).

An N-terminal signal peptide occupies residues 1–21 (MSFLRPTLALLAVTALVTTSA). N-linked (GlcNAc...) asparagine glycosylation is present at Asn-45. The Secondary area of contact signature appears at 68–72 (QVVSG).

This sequence belongs to the cystatin family.

The protein localises to the secreted. Functionally, secreted effector that interacts with and inhibits host apoplastic pathogenesis-related papain-like cysteine proteases. Inhibition of host proteases by a pathogen extracellular protease inhibitor forms a specific type of defense-counterdefense mechanism between plants and microbial pathogens. The sequence is that of Cystatin-like cysteine protease inhibitor EPIC2A from Phytophthora infestans (strain T30-4) (Potato late blight agent).